The following is a 293-amino-acid chain: N-acetylneuraminate lyase (293 aa).

Aceneuramate contacts are provided by serine 48 and serine 49. Tyrosine 137 functions as the Proton donor in the catalytic mechanism. Catalysis depends on lysine 165, which acts as the Schiff-base intermediate with substrate. Aceneuramate contacts are provided by threonine 167, glycine 189, aspartate 191, glutamate 192, and serine 208.

This sequence belongs to the DapA family. NanA subfamily. In terms of assembly, homotetramer.

The protein resides in the cytoplasm. It carries out the reaction aceneuramate = aldehydo-N-acetyl-D-mannosamine + pyruvate. Its pathway is amino-sugar metabolism; N-acetylneuraminate degradation; D-fructose 6-phosphate from N-acetylneuraminate: step 1/5. Catalyzes the reversible aldol cleavage of N-acetylneuraminic acid (sialic acid; Neu5Ac) to form pyruvate and N-acetylmannosamine (ManNAc) via a Schiff base intermediate. The protein is N-acetylneuraminate lyase of Staphylococcus aureus (strain bovine RF122 / ET3-1).